Here is a 550-residue protein sequence, read N- to C-terminus: Arginine--tRNA ligase (550 aa).

The 'HIGH' region motif lies at 130-140 (ANPTGPIHLGG).

The protein belongs to the class-I aminoacyl-tRNA synthetase family. As to quaternary structure, monomer.

It is found in the cytoplasm. The enzyme catalyses tRNA(Arg) + L-arginine + ATP = L-arginyl-tRNA(Arg) + AMP + diphosphate. The chain is Arginine--tRNA ligase from Rhodococcus jostii (strain RHA1).